The chain runs to 450 residues: 3-phosphoshikimate 1-carboxyvinyltransferase (450 aa).

3-phosphoshikimate-binding residues include Lys-28, Ser-29, and Arg-33. Residue Lys-28 coordinates phosphoenolpyruvate. Gly-100 and Arg-128 together coordinate phosphoenolpyruvate. The 3-phosphoshikimate site is built by Ser-173, Gln-175, Asp-326, and Lys-353. Position 175 (Gln-175) interacts with phosphoenolpyruvate. The active-site Proton acceptor is Asp-326. Phosphoenolpyruvate-binding residues include Arg-357 and Arg-402.

Belongs to the EPSP synthase family. In terms of assembly, monomer.

It localises to the cytoplasm. It carries out the reaction 3-phosphoshikimate + phosphoenolpyruvate = 5-O-(1-carboxyvinyl)-3-phosphoshikimate + phosphate. The protein operates within metabolic intermediate biosynthesis; chorismate biosynthesis; chorismate from D-erythrose 4-phosphate and phosphoenolpyruvate: step 6/7. Its function is as follows. Catalyzes the transfer of the enolpyruvyl moiety of phosphoenolpyruvate (PEP) to the 5-hydroxyl of shikimate-3-phosphate (S3P) to produce enolpyruvyl shikimate-3-phosphate and inorganic phosphate. This Brucella melitensis biotype 1 (strain ATCC 23456 / CCUG 17765 / NCTC 10094 / 16M) protein is 3-phosphoshikimate 1-carboxyvinyltransferase.